Consider the following 570-residue polypeptide: Sulfite reductase [NADPH] hemoprotein beta-component (570 aa).

Residues Cys434, Cys440, Cys479, and Cys483 each coordinate [4Fe-4S] cluster. Cys483 is a siroheme binding site.

This sequence belongs to the nitrite and sulfite reductase 4Fe-4S domain family. In terms of assembly, alpha(8)-beta(8). The alpha component is a flavoprotein, the beta component is a hemoprotein. Siroheme is required as a cofactor. Requires [4Fe-4S] cluster as cofactor.

It carries out the reaction hydrogen sulfide + 3 NADP(+) + 3 H2O = sulfite + 3 NADPH + 4 H(+). Its pathway is sulfur metabolism; hydrogen sulfide biosynthesis; hydrogen sulfide from sulfite (NADPH route): step 1/1. Its function is as follows. Component of the sulfite reductase complex that catalyzes the 6-electron reduction of sulfite to sulfide. This is one of several activities required for the biosynthesis of L-cysteine from sulfate. The polypeptide is Sulfite reductase [NADPH] hemoprotein beta-component (Escherichia coli (strain B / BL21-DE3)).